The sequence spans 506 residues: Gamma-aminobutyric acid receptor subunit epsilon (506 aa).

The signal sequence occupies residues 1–22 (MLSKVLPVLLGILLILQSRVEG). The segment at 23-66 (PQTESKNEASSRDVVYGPQPQPLENQLLSEETKSTETETGSRVG) is disordered. Residues 23-280 (PQTESKNEAS…FNVSRRFGYV (258 aa)) lie on the Extracellular side of the membrane. N134 carries an N-linked (GlcNAc...) asparagine glycan. A disulfide bridge links C195 with C209. N-linked (GlcNAc...) asparagine glycosylation occurs at N252. Residues 281 to 301 (AFQNYVPSSVTTMLSWVSFWI) traverse the membrane as a helical segment. Over 302–307 (KTESAP) the chain is Cytoplasmic. Residues 308–327 (ARTSLGITSVLTMTTLGTFS) traverse the membrane as a helical segment. Over 328-343 (RKNFPRVSYITALDFY) the chain is Extracellular. A helical transmembrane segment spans residues 344-364 (IAICFVFCFCALLEFAVLNFL). Over 365 to 485 (IYNQTKAHAS…HVYRLDNYSR (121 aa)) the chain is Cytoplasmic. Residues 413–438 (EGSDGEERPSCSAQQPPSPGSPEGPR) form a disordered region. A helical transmembrane segment spans residues 486 to 506 (VVFPVTFFFFNVLYWLVCLNL).

This sequence belongs to the ligand-gated ion channel (TC 1.A.9) family. Gamma-aminobutyric acid receptor (TC 1.A.9.5) subfamily. GABRE sub-subfamily. Heteropentamer, formed by a combination of alpha (GABRA1-6), beta (GABRB1-3), gamma (GABRG1-3), delta (GABRD), epsilon (GABRE), rho (GABRR1-3), pi (GABRP) and theta (GABRQ) chains, each subunit exhibiting distinct physiological and pharmacological properties. As to expression, expressed in many tissues. Highest levels of expression in adult heart and placenta.

Its subcellular location is the cell membrane. The protein localises to the postsynaptic cell membrane. The enzyme catalyses chloride(in) = chloride(out). Its activity is regulated as follows. Potentiated by pentobarbital, loreclezole, and lanthanum and inhibited by zinc and furosemide. Introduction of the epsilon subunit to the receptor complex resulted in diminished modulatory effects by etomidate, propofol, pregnanolone and flurazepam. Its function is as follows. Epsilon subunit of the heteropentameric ligand-gated chloride channel gated by gamma-aminobutyric acid (GABA), a major inhibitory neurotransmitter in the brain. GABA-gated chloride channels, also named GABA(A) receptors (GABAAR), consist of five subunits arranged around a central pore and contain GABA active binding site(s) located at the alpha and beta subunit interfaces. When activated by GABA, GABAARs selectively allow the flow of chloride anions across the cell membrane down their electrochemical gradient. GABAARs containing epsilon subunits also permit spontaneous chloride channel activity while preserving the structural information required for GABA-gated openings. GABARs containing epsilon subunit may regulate cardiac function. The protein is Gamma-aminobutyric acid receptor subunit epsilon of Homo sapiens (Human).